The following is a 383-amino-acid chain: Adaptive-response sensory kinase SasA (383 aa).

One can recognise a Histidine kinase domain in the interval 152 to 365; it reads MVAHELRTPL…CFTFNVPIWQ (214 aa). Residue His155 is modified to Phosphohistidine; by autocatalysis.

In terms of assembly, homooligomerizes. Interacts with KaiC. Participates in the KaiABC clock complex, whose core is composed of a KaiC homohexamer, 6 KaiB and up to 6 KaiA dimers. SasA and KaiB(fs) compete to bind to KaiC.

It catalyses the reaction ATP + protein L-histidine = ADP + protein N-phospho-L-histidine.. Member of the two-component regulatory system SasA/RpaA involved in genome-wide circadian gene expression. One of several clock output pathways. Participates in the Kai clock protein complex, the main circadian regulator in cyanobacteria, via its interaction with KaiC. KaiC enhances the autophosphorylation activity of SasA, which then transfers its phosphate group to RpaA to activate it. In addition to its output function, recruits fold-shifted KaiB (KaiB(fs)) to KaiC to cooperatively form the KaiB(6):KaiC(6) complex (independent of SasA kinase activity). Required for robustness of the circadian rhythm of gene expression and is involved in clock output, also required for adaptation to light/dark cycles. This is Adaptive-response sensory kinase SasA from Synechococcus sp. (strain CC9311).